The following is a 561-amino-acid chain: Asparagine synthetase [glutamine-hydrolyzing] (561 aa).

The active-site For GATase activity is Cys2. The region spanning Cys2–Lys191 is the Glutamine amidotransferase type-2 domain. L-glutamine contacts are provided by residues Arg49–Val53, Asn75–Glu77, and Asp97. In terms of domain architecture, Asparagine synthetase spans His213–Tyr536. ATP-binding positions include Leu256, Ile288, and Ser363 to Gly364. N6-acetyllysine is present on Lys385. Phosphothreonine is present on Thr545.

It carries out the reaction L-aspartate + L-glutamine + ATP + H2O = L-asparagine + L-glutamate + AMP + diphosphate + H(+). The protein operates within amino-acid biosynthesis; L-asparagine biosynthesis; L-asparagine from L-aspartate (L-Gln route): step 1/1. The protein is Asparagine synthetase [glutamine-hydrolyzing] (ASNS) of Bos taurus (Bovine).